Consider the following 166-residue polypeptide: SUMO-conjugating enzyme UBC9 (166 aa).

Positions 4–157 (IAAGRLAEER…VKKEAVKYAA (154 aa)) constitute a UBC core domain. The Glycyl thioester intermediate role is filled by cysteine 93.

The protein belongs to the ubiquitin-conjugating enzyme family. As to quaternary structure, interacts with brd-1 and rad-51. Interacts with smo-1 and sop-2. Interacts with bet-1 (via BROMO domain 2). Interacts with isoforms 1 and 2 of X-box-binding protein xbp-1.

Its subcellular location is the nucleus envelope. The protein operates within protein modification; protein sumoylation. Its function is as follows. Accepts the ubiquitin-like protein smo-1 from the aos-1-uba-2 E1 complex and catalyzes its covalent attachment to other proteins with the help of an E3 ligase such as gei-17. Required to sumoylate the ETS transcription factor lin-1, Polycomb protein sop-2, and intermediate filament proteins, such as ifb-1. Required for embryonic development, fertility, vulval morphogenesis, inhibition of vulval cell fates, lifespan, and neuromuscular activity. In Caenorhabditis elegans, this protein is SUMO-conjugating enzyme UBC9.